A 154-amino-acid chain; its full sequence is Myoglobin (154 aa).

The region spanning 2–148 is the Globin domain; that stretch reads GLSDQEWQQV…FRNDMASKYK (147 aa). His-65 provides a ligand contact to nitrite. His-65 lines the O2 pocket. His-94 lines the heme b pocket.

Monomeric.

It is found in the cytoplasm. The protein localises to the sarcoplasm. It carries out the reaction Fe(III)-heme b-[protein] + nitric oxide + H2O = Fe(II)-heme b-[protein] + nitrite + 2 H(+). The catalysed reaction is H2O2 + AH2 = A + 2 H2O. Its function is as follows. Monomeric heme protein which primary function is to store oxygen and facilitate its diffusion within muscle tissues. Reversibly binds oxygen through a pentacoordinated heme iron and enables its timely and efficient release as needed during periods of heightened demand. Depending on the oxidative conditions of tissues and cells, and in addition to its ability to bind oxygen, it also has a nitrite reductase activity whereby it regulates the production of bioactive nitric oxide. Under stress conditions, like hypoxia and anoxia, it also protects cells against reactive oxygen species thanks to its pseudoperoxidase activity. The protein is Myoglobin (MB) of Struthio camelus (Common ostrich).